The sequence spans 107 residues: Urease subunit beta (107 aa).

This sequence belongs to the urease beta subunit family. As to quaternary structure, heterotrimer of UreA (gamma), UreB (beta) and UreC (alpha) subunits. Three heterotrimers associate to form the active enzyme.

It is found in the cytoplasm. The catalysed reaction is urea + 2 H2O + H(+) = hydrogencarbonate + 2 NH4(+). It functions in the pathway nitrogen metabolism; urea degradation; CO(2) and NH(3) from urea (urease route): step 1/1. In Escherichia coli, this protein is Urease subunit beta.